We begin with the raw amino-acid sequence, 288 residues long: Glutamate racemase (288 aa).

Residues 10–11 (DS) and 42–43 (YG) each bind substrate. The active-site Proton donor/acceptor is Cys73. Residue 74–75 (NT) participates in substrate binding. Cys184 serves as the catalytic Proton donor/acceptor. Residue 185–186 (TH) participates in substrate binding.

It belongs to the aspartate/glutamate racemases family.

The catalysed reaction is L-glutamate = D-glutamate. It participates in cell wall biogenesis; peptidoglycan biosynthesis. Its function is as follows. Provides the (R)-glutamate required for cell wall biosynthesis. The polypeptide is Glutamate racemase (Corynebacterium kroppenstedtii (strain DSM 44385 / JCM 11950 / CIP 105744 / CCUG 35717)).